The chain runs to 279 residues: Protoheme IX farnesyltransferase (279 aa).

9 helical membrane passes run Met-1–Ala-21, Ile-29–Asn-49, Ile-79–Ile-99, Phe-101–Leu-121, Phe-128–Val-148, Cys-156–Ile-176, Ile-200–Phe-220, Phe-225–Ser-245, and Ile-254–Met-274.

Belongs to the UbiA prenyltransferase family. Protoheme IX farnesyltransferase subfamily.

The protein resides in the cell membrane. It catalyses the reaction heme b + (2E,6E)-farnesyl diphosphate + H2O = Fe(II)-heme o + diphosphate. Its pathway is porphyrin-containing compound metabolism; heme O biosynthesis; heme O from protoheme: step 1/1. Converts heme B (protoheme IX) to heme O by substitution of the vinyl group on carbon 2 of heme B porphyrin ring with a hydroxyethyl farnesyl side group. The polypeptide is Protoheme IX farnesyltransferase (Buchnera aphidicola subsp. Cinara cedri (strain Cc)).